Consider the following 555-residue polypeptide: WRKY transcription factor WRKY24 (555 aa).

2 disordered regions span residues 38-65 (GGGG…PSSF) and 132-248 (QTAP…CTFP). Pro residues predominate over residues 51–61 (PSLPLSPPPVS). Low complexity predominate over residues 163-194 (QQQQQPWGYQQQPAGMDAGANAASFGAAPFQA). The WRKY 1 DNA-binding region spans 214 to 278 (SQRRSSDDGY…YKGTHNHAKP (65 aa)). The Nuclear localization signal motif lies at 253–259 (KKKVERS). Residues 270 to 367 (KGTHNHAKPQ…EGISMAGNRT (98 aa)) form a disordered region. Composition is skewed to polar residues over residues 277-294 (KPQN…QVLQ) and 310-320 (TAATPENSSAS). Basic and acidic residues predominate over residues 347–356 (DSKRWRKDGD). Residues 379 to 444 (SDIDILDDGY…YEGKHNHDVP (66 aa)) constitute a DNA-binding region (WRKY 2). Positions 466–555 (HPYLPNQPPP…DDMFFQNSLY (90 aa)) are transcription repression of gibberellic acid (GA)-induced promoters. 2 disordered regions span residues 471–498 (NQPP…GQGP) and 513–555 (GFDD…NSLY).

The protein belongs to the WRKY group II-a family. Expressed in aleurone cells. Mostly expressed in aleurone layers and leaves, and, to a lower extent, in roots, panicles and embryos.

Its subcellular location is the nucleus. In terms of biological role, transcription repressor. Interacts specifically with the W box (5'-(T)TGAC[CT]-3'), a frequently occurring elicitor-responsive cis-acting element. Negative regulator of both gibberellic acid (GA) and abscisic acid (ABA) signaling in aleurone cells, probably by interfering with GAM1, via the specific repression of GA- and ABA-induced promoters. In Oryza sativa subsp. indica (Rice), this protein is WRKY transcription factor WRKY24.